Here is a 264-residue protein sequence, read N- to C-terminus: Undecaprenyl-diphosphatase (264 aa).

8 consecutive transmembrane segments (helical) span residues 7-27 (VVILGFIQGIAEFLPISSSGH), 39-59 (LPIVFDIYLHLATVLVVMIYY), 89-109 (ILLILIITIITAFIGIFIEMF), 112-132 (LFTLNLVLINFIVTSILLFLL), 145-165 (ILLAGCLIGTMQGIGAMPGIS), 182-202 (SESFEISFLSLIPIVFGSLLL), 212-232 (MLFSIFEINLGAIIAFLVGLF), and 244-264 (SKLYYFSVYLIILVSLVYFLF).

This sequence belongs to the UppP family.

It localises to the cell inner membrane. It carries out the reaction di-trans,octa-cis-undecaprenyl diphosphate + H2O = di-trans,octa-cis-undecaprenyl phosphate + phosphate + H(+). Catalyzes the dephosphorylation of undecaprenyl diphosphate (UPP). Confers resistance to bacitracin. The chain is Undecaprenyl-diphosphatase from Borrelia hermsii (strain HS1 / DAH).